The following is a 376-amino-acid chain: Mannosyl phosphorylinositol ceramide synthase CSH1 (376 aa).

A run of 2 helical transmembrane segments spans residues 7–27 and 274–294; these read ILIIANIALLISIIHYTFDLL and ILSCVVTGFIFGFFILYGEFT. The disordered stretch occupies residues 331–351; it reads NKEKRRNPTRHEYNSRGKRLR. Serine 354 is modified (phosphoserine).

It belongs to the glycosyltransferase 32 family. Heterodimer of CSH1 and CSG2.

The protein resides in the vacuole membrane. It carries out the reaction a 1D-myo-inositol-1-phospho-N-[(R)-2-hydroxy-very-long-chain fatty acyl]-(R)-4-hydroxysphingoid base + GDP-alpha-D-mannose = an alpha-D-mannosyl-(1&lt;-&gt;6)-1D-myo-inositol-1-phospho-N-[(R)-2-hydroxy-very-long-chain fatty acyl]-(R)-4-hydroxysphingoid base + GDP + H(+). Functionally, involved in the synthesis of mannosyl phosphorylinositol ceramide. Catalyzes the addition of mannosyl to phosphorylinositol ceramide. This is Mannosyl phosphorylinositol ceramide synthase CSH1 from Saccharomyces cerevisiae (strain ATCC 204508 / S288c) (Baker's yeast).